A 361-amino-acid chain; its full sequence is Aminomethyltransferase (361 aa).

This sequence belongs to the GcvT family. As to quaternary structure, the glycine cleavage system is composed of four proteins: P, T, L and H.

The enzyme catalyses N(6)-[(R)-S(8)-aminomethyldihydrolipoyl]-L-lysyl-[protein] + (6S)-5,6,7,8-tetrahydrofolate = N(6)-[(R)-dihydrolipoyl]-L-lysyl-[protein] + (6R)-5,10-methylene-5,6,7,8-tetrahydrofolate + NH4(+). In terms of biological role, the glycine cleavage system catalyzes the degradation of glycine. In Bacteroides fragilis (strain ATCC 25285 / DSM 2151 / CCUG 4856 / JCM 11019 / LMG 10263 / NCTC 9343 / Onslow / VPI 2553 / EN-2), this protein is Aminomethyltransferase.